Reading from the N-terminus, the 320-residue chain is Aldose reductase (320 aa).

Tyr60 functions as the Proton donor in the catalytic mechanism. His121 serves as a coordination point for substrate. Residue 215–269 (SPLGSSEKNLAHDPVVEKVANKLNKTPGQVLIKWALQRGTSVIPKSSKDERIKEN) participates in NADP(+) binding.

This sequence belongs to the aldo/keto reductase family.

The catalysed reaction is an alditol + NAD(+) = an aldose + NADH + H(+). It catalyses the reaction an alditol + NADP(+) = an aldose + NADPH + H(+). The sequence is that of Aldose reductase from Hordeum vulgare (Barley).